The following is a 662-amino-acid chain: Sporulation protein RMD8 (662 aa).

Disordered regions lie at residues 1 to 136 (MSYK…RTSK), 286 to 320 (YELE…SFNP), and 346 to 406 (LKKE…QNDF). Ser2 carries the post-translational modification N-acetylserine. Residues 99–121 (SARREERLSSSSSDRPRQYERLS) are compositionally biased toward basic and acidic residues. Over residues 286–304 (YELETSGNNNNANQDTTTV) the composition is skewed to polar residues. Residues 383 to 395 (SSRSPASPSSIST) are compositionally biased toward low complexity. The helical transmembrane segment at 630-647 (VTWWFILVILFGVIFSLT) threads the bilayer.

Belongs to the RMD1/sif2 family.

It is found in the membrane. Required for sporulation. The sequence is that of Sporulation protein RMD8 (RMD8) from Saccharomyces cerevisiae (strain ATCC 204508 / S288c) (Baker's yeast).